The sequence spans 143 residues: uncharacterized protein (143 aa).

Residues 50–143 (NKEDAVVVDL…GENLPLVRGK (94 aa)) form the Rhodanese domain. Position 91 is an N6-acetyllysine (K91).

This is an uncharacterized protein from Escherichia coli O6:H1 (strain CFT073 / ATCC 700928 / UPEC).